The sequence spans 405 residues: Elongation factor Tu (405 aa).

The region spanning Lys-10–Gln-213 is the tr-type G domain. Residues Gly-19 to Ser-26 are G1. Gly-19 to Ser-26 provides a ligand contact to GTP. Residue Ser-26 coordinates Mg(2+). The interval Gly-64–Asn-68 is G2. Residues Asp-85 to Gly-88 are G3. GTP-binding positions include Asp-85 to His-89 and Asn-140 to Asp-143. Positions Asn-140–Asp-143 are G4. The tract at residues Ser-178–Leu-180 is G5.

The protein belongs to the TRAFAC class translation factor GTPase superfamily. Classic translation factor GTPase family. EF-Tu/EF-1A subfamily. Monomer.

The protein localises to the cytoplasm. The enzyme catalyses GTP + H2O = GDP + phosphate + H(+). Functionally, GTP hydrolase that promotes the GTP-dependent binding of aminoacyl-tRNA to the A-site of ribosomes during protein biosynthesis. The polypeptide is Elongation factor Tu (Aquifex aeolicus (strain VF5)).